We begin with the raw amino-acid sequence, 465 residues long: MSNLFKYLPSVDSVLTRLEEEGVIDGLPRTLSRDLVNGFLDVCREEIKGGIITEEKQLSPDVLFPRLTCHVRAGAKPHFRRVLNGTGVVVHTNLGRSLLAESAVKAVTEACACYSNLEFDLKTGERGSRYSHVEKLICEITGAEAALVVNNNASAVLITLETLAKGREAIVSRGQLVEIGGSFRIPDVMTKSGAFLREVGATNRTHLHDYENAINEETALLMKVHTSNFRVIGFTKEVSGGELAELGRKHDLPVYEDLGSGNLTNFSGLGLMREPTVQEVVAEDVDVVSFSGDKVLGGPQAGIIVGKKKYIDAIKKNPLNRAVRIDKMTLAALEATLRLYLDPETAKREVPTVRMITEKPENLKKQAQALARTLRRELGETANIGVREGVSRVGGGAFPEQDLKTFLVTVVPSAKVTVEELKEGLLSTEPPLVGRIEEDAFCLDPRTLTREEYKLCAEAINQILE.

K294 is subject to N6-(pyridoxal phosphate)lysine.

Belongs to the SelA family. The cofactor is pyridoxal 5'-phosphate.

The protein localises to the cytoplasm. It carries out the reaction L-seryl-tRNA(Sec) + selenophosphate + H(+) = L-selenocysteinyl-tRNA(Sec) + phosphate. It functions in the pathway aminoacyl-tRNA biosynthesis; selenocysteinyl-tRNA(Sec) biosynthesis; selenocysteinyl-tRNA(Sec) from L-seryl-tRNA(Sec) (bacterial route): step 1/1. Converts seryl-tRNA(Sec) to selenocysteinyl-tRNA(Sec) required for selenoprotein biosynthesis. This chain is L-seryl-tRNA(Sec) selenium transferase, found in Maridesulfovibrio salexigens (strain ATCC 14822 / DSM 2638 / NCIMB 8403 / VKM B-1763) (Desulfovibrio salexigens).